The following is a 123-amino-acid chain: Large ribosomal subunit protein bL12 (123 aa).

Belongs to the bacterial ribosomal protein bL12 family. Homodimer. Part of the ribosomal stalk of the 50S ribosomal subunit. Forms a multimeric L10(L12)X complex, where L10 forms an elongated spine to which 2 to 4 L12 dimers bind in a sequential fashion. Binds GTP-bound translation factors.

Its function is as follows. Forms part of the ribosomal stalk which helps the ribosome interact with GTP-bound translation factors. Is thus essential for accurate translation. This chain is Large ribosomal subunit protein bL12, found in Albidiferax ferrireducens (strain ATCC BAA-621 / DSM 15236 / T118) (Rhodoferax ferrireducens).